Here is a 78-residue protein sequence, read N- to C-terminus: Translational regulator CsrA (78 aa).

It belongs to the CsrA/RsmA family. As to quaternary structure, homodimer; the beta-strands of each monomer intercalate to form a hydrophobic core, while the alpha-helices form wings that extend away from the core.

Its subcellular location is the cytoplasm. Its function is as follows. A translational regulator that binds mRNA to regulate translation initiation and/or mRNA stability. Usually binds in the 5'-UTR at or near the Shine-Dalgarno sequence preventing ribosome-binding, thus repressing translation. Its main target seems to be the major flagellin gene, while its function is anatagonized by FliW. The chain is Translational regulator CsrA from Caldicellulosiruptor bescii (strain ATCC BAA-1888 / DSM 6725 / KCTC 15123 / Z-1320) (Anaerocellum thermophilum).